The sequence spans 96 residues: Putative membrane protein insertion efficiency factor (96 aa).

Residues 68–96 (DPVPEHFPARHPRPQGSPPTDHPPTDQPS) form a disordered region. The segment covering 82–96 (QGSPPTDHPPTDQPS) has biased composition (pro residues).

Belongs to the UPF0161 family.

The protein localises to the cell membrane. Its function is as follows. Could be involved in insertion of integral membrane proteins into the membrane. The sequence is that of Putative membrane protein insertion efficiency factor from Deinococcus radiodurans (strain ATCC 13939 / DSM 20539 / JCM 16871 / CCUG 27074 / LMG 4051 / NBRC 15346 / NCIMB 9279 / VKM B-1422 / R1).